A 382-amino-acid chain; its full sequence is MKKWMAAVFVMMLMLCFGGIENVKAAEPKVYQFDFGSGSMEPGYIGVRASDRYDRSKGYGFQTPENMRDVAASGAGVKSDAVQFLAYGTKSNNTFNVDLPNGLYEVKVTLGNTARASVAAEGVFQVINMTGDGAEDTFQIPVTDGQLNLLVTEGKAGTAFTLSALKIKKLSDQPVTNRTIYVGGDSTVCNYYPLNSSKQAGWGQMLPHYIDKHTFQVRNMASGGQIARGFRNDGQLEAILKYIKPGDYFMLQLGINDTNPKHKESEAEFKEVMRDMIRQVKAKGADVILSTPQGRATDFTSEGIHSSVNRWYRASILALAEEEKTYLIDLNVLSSAYFTSIGPERTLGLYMDGDTLHPNRAGADALARLAVQELKRQGIAGF.

Positions 1–25 (MKKWMAAVFVMMLMLCFGGIENVKA) are cleaved as a signal peptide. The active-site Nucleophile is Ser-186. Residues Asp-354 and His-357 contribute to the active site.

Belongs to the 'GDSL' lipolytic enzyme family.

This is an uncharacterized protein from Bacillus subtilis (strain 168).